Consider the following 475-residue polypeptide: Eukaryotic translation initiation factor 3 subunit L (475 aa).

The region spanning 257–451 (DAIRMFSHIL…DLDYAMQGDL (195 aa)) is the PCI domain.

The protein belongs to the eIF-3 subunit L family. Component of the eukaryotic translation initiation factor 3 (eIF-3) complex.

Its subcellular location is the cytoplasm. In terms of biological role, component of the eukaryotic translation initiation factor 3 (eIF-3) complex, which is involved in protein synthesis of a specialized repertoire of mRNAs and, together with other initiation factors, stimulates binding of mRNA and methionyl-tRNAi to the 40S ribosome. The eIF-3 complex specifically targets and initiates translation of a subset of mRNAs involved in cell proliferation. This chain is Eukaryotic translation initiation factor 3 subunit L, found in Botryotinia fuckeliana (strain B05.10) (Noble rot fungus).